The sequence spans 278 residues: HTH-type transcriptional activator RhaS (278 aa).

The HTH araC/xylS-type domain occupies Asn174–Gly272. 2 DNA-binding regions (H-T-H motif) span residues Glu191 to Thr212 and Val239 to Phe262.

Binds DNA as a dimer.

The protein resides in the cytoplasm. Its function is as follows. Activates expression of the rhaBAD and rhaT operons. This is HTH-type transcriptional activator RhaS from Salmonella heidelberg (strain SL476).